We begin with the raw amino-acid sequence, 330 residues long: MPHSVTLRGPSPWGFRLVGGRDFSAPLTISRVHAGSKAALAALCPGDLIQAINGESTELMTHLEAQNRIKGCHDHLTLSVSRPEGRSWPSAPDDSKAQAHRIHIDPEIQDGSPTTSRRPSGTGTGPEDGRPSLGSPYGQPPRFPVPHNGSSEATLPAQMSTLHVSPPPSADPARGLPRSRDCRVDLGSEVYRMLREPAEPVAAEPKQSGSFRYLQGMLEAGEGGDWPGPGGPRNLKPTASKLGAPLSGLQGLPECTRCGHGIVGTIVKARDKLYHPECFMCSDCGLNLKQRGYFFLDERLYCESHAKARVKPPEGYDVVAVYPNAKVELV.

The 84-residue stretch at 1 to 84 (MPHSVTLRGP…HLTLSVSRPE (84 aa)) folds into the PDZ domain. The disordered stretch occupies residues 104 to 180 (IDPEIQDGSP…DPARGLPRSR (77 aa)). Residues 111 to 121 (GSPTTSRRPSG) are compositionally biased toward low complexity. Residues Ser-112, Ser-116, Ser-120, and Ser-135 each carry the phosphoserine modification. Polar residues predominate over residues 148-163 (NGSSEATLPAQMSTLH). One can recognise an LIM zinc-binding domain in the interval 253 to 312 (PECTRCGHGIVGTIVKARDKLYHPECFMCSDCGLNLKQRGYFFLDERLYCESHAKARVKP).

In terms of assembly, homodimer. Interacts with PTPN13. Interacts (via C-terminus only or via combined C-terminus and LIM domain, but not LIM domain only) with PTPN13 (via the second or fourth PDZ domains). Found in a complex with PTPN13 and TRIP6. Interacts (via PDZ domain) with ACTN1 and ACTN2 (via C-terminal SDL residues). Interacts (via PDZ domain) with TRIP6 (via the second LIM domain or via the third LIM domain plus C-terminus). Interacts (via LIM domain) with GRIA1 (via C-terminus); this interaction as well as the interaction with alpha-actinin is required for their colocalization in early endosomes. Interacts with PDLIM1. Forms (via LIM domain) a heterodimer with PDLIM3. Interacts directly with SRC (via kinase domain and to a lesser extent the SH2 domain). Isoform 2 interacts with NQO1. NQO1-stabilized isoform 2 heterodimerizes with isoform 1. In terms of processing, phosphorylated on tyrosine residue(s). Can be dephosphorylated by PTPN13. In terms of tissue distribution, found in brain.

The protein resides in the cytoplasm. It localises to the cytoskeleton. The protein localises to the nucleus. It is found in the perinuclear region. Its subcellular location is the cell projection. The protein resides in the lamellipodium. It localises to the dendritic spine. The protein localises to the early endosome membrane. It is found in the recycling endosome membrane. Its subcellular location is the synapse. The protein resides in the synaptosome. Suppresses SRC activation by recognizing and binding to active SRC and facilitating PTPN13-mediated dephosphorylation of SRC 'Tyr-419' leading to its inactivation. Inactivated SRC dissociates from this protein allowing the initiation of a new SRC inactivation cycle. Involved in reorganization of the actin cytoskeleton. In nonmuscle cells, binds to ACTN1 (alpha-actinin-1), increases the affinity of ACTN1 to F-actin (filamentous actin), and promotes formation of actin stress fibers. Involved in regulation of the synaptic AMPA receptor transport in dendritic spines of hippocampal pyramidal neurons directing the receptors toward an insertion at the postsynaptic membrane. Links endosomal surface-internalized GRIA1-containing AMPA receptors to the alpha-actinin/actin cytoskeleton. Increases AMPA receptor-mediated excitatory postsynaptic currents in neurons. In terms of biological role, involved in reorganization of the actin cytoskeleton and in regulation of cell migration. In response to oxidative stress, binds to NQO1, which stabilizes it and protects it from ubiquitin-independent degradation by the core 20S proteasome. Stabilized protein is able to heterodimerize with isoform 1 changing the subcellular location of it from cytoskeleton and nuclei to cytosol, leading to loss of isoforms 1 ability to induce formation of actin stress fibers. Counteracts the effects produced by isoform 1 on organization of actin cytoskeleton and cell motility to fine-tune actin cytoskeleton rearrangement and to attenuate cell migration. This is PDZ and LIM domain protein 4 (PDLIM4) from Homo sapiens (Human).